Here is a 766-residue protein sequence, read N- to C-terminus: Phospholipid phosphatase-related protein type 4 (766 aa).

Serine 37 is modified (phosphoserine). 3 consecutive transmembrane segments (helical) span residues 68-88 (LPCF…SLYF), 120-140 (AIPF…TIMV), and 179-199 (FVGV…IIQL). Residues asparagine 215 and asparagine 220 are each glycosylated (N-linked (GlcNAc...) asparagine). The chain crosses the membrane as a helical span at residues 248 to 268 (SFPSQHATLAAFAAVYVSMYF). Residue asparagine 269 is glycosylated (N-linked (GlcNAc...) asparagine). The next 2 helical transmembrane spans lie at 277–297 (KLLK…CGLT) and 309–329 (VYCG…YAVG). The residue at position 347 (serine 347) is a Phosphoserine. Asparagine 363 carries an N-linked (GlcNAc...) asparagine glycan. Serine 386 is subject to Phosphoserine. Residue asparagine 433 is glycosylated (N-linked (GlcNAc...) asparagine). Serine 439 bears the Phosphoserine mark. The disordered stretch occupies residues 454–494 (SKNESRKMSLQVMDTEPEGQSPPRSIEMRSSSEPSRVGVNG). An N-linked (GlcNAc...) asparagine glycan is attached at asparagine 456. Phosphoserine is present on residues serine 462 and serine 474. 3 N-linked (GlcNAc...) asparagine glycosylation sites follow: asparagine 515, asparagine 545, and asparagine 570. A Phosphoserine modification is found at serine 608. Disordered stretches follow at residues 634 to 654 (PIIQ…KWKA), 672 to 701 (DSES…HHHH), and 742 to 766 (ERSN…AYKD). The span at 672-697 (DSESCESLKDSFGSGDRKRSNIDSNE) shows a compositional bias: basic and acidic residues. The segment covering 743-752 (RSNSPENTRN) has biased composition (polar residues).

The protein belongs to the PA-phosphatase related phosphoesterase family. Post-translationally, O-glycosylated. Probably at Ser-347. In terms of tissue distribution, brain-specific, it is exclusively expressed in neurons (at protein level).

It localises to the postsynaptic density membrane. Its function is as follows. Postsynaptic density membrane protein that indirectly regulates glutamatergic synaptic transmission through lysophosphatidic acid (LPA)-mediated signaling pathways. Binds lysophosphatidic acid (LPA) and mediates its internalization into cells. Could act as receptor or a transporter of this lipid at the post-synaptic membrane. Modulates lysophosphatidic acid (LPA) activity in neuron axonal outgrowth during development by attenuating phospholipid-induced axon collapse. This is Phospholipid phosphatase-related protein type 4 from Mus musculus (Mouse).